The sequence spans 230 residues: Bidirectional sugar transporter SWEET2b (230 aa).

Over 1–6 the chain is Extracellular; sequence MDSLYD. A helical membrane pass occupies residues 7–27; that stretch reads ISCFAAGLAGNIFALALFLSP. Residues 13–98 enclose the MtN3/slv 1 domain; sequence GLAGNIFALA…CLFIFYADSR (86 aa). The Cytoplasmic segment spans residues 28 to 45; sequence VTTFKRILKAKSTERFDG. Residues 46–66 traverse the membrane as a helical segment; that stretch reads LPYLFSLLNCLICLWYGLPWV. Residues 67–72 are Extracellular-facing; that stretch reads ADGRLL. A helical transmembrane segment spans residues 73–93; the sequence is VATVNGIGAVFQLAYICLFIF. The Cytoplasmic segment spans residues 94 to 103; that stretch reads YADSRKTRMK. A helical transmembrane segment spans residues 104–124; sequence IIGLLVLVVCGFALVSHASVF. Residues 125-137 are Extracellular-facing; that stretch reads FFDQPLRQQFVGA. The MtN3/slv 2 domain maps to 133 to 217; it reads QFVGAVSMAS…LALYAYYSRK (85 aa). The chain crosses the membrane as a helical span at residues 138–158; that stretch reads VSMASLISMFASPLAVMGVVI. Over 159–167 the chain is Cytoplasmic; the sequence is RSESVEFMP. A helical membrane pass occupies residues 168–188; it reads FYLSLSTFLMSASFALYGLLL. Topologically, residues 189-190 are extracellular; the sequence is RD. Residues 191–211 traverse the membrane as a helical segment; sequence FFIYFPNGLGLILGAMQLALY. The Cytoplasmic segment spans residues 212 to 230; that stretch reads AYYSRKWRGQDSSAPLLLA.

It belongs to the SWEET sugar transporter family. As to quaternary structure, forms homooligomers and/or heterooligomers.

Its subcellular location is the cell membrane. In terms of biological role, mediates both low-affinity uptake and efflux of sugar across the plasma membrane. This Oryza sativa subsp. indica (Rice) protein is Bidirectional sugar transporter SWEET2b (SWEET2B).